We begin with the raw amino-acid sequence, 97 residues long: uncharacterized protein (97 aa).

This is an uncharacterized protein from Bacillus subtilis (strain 168).